Consider the following 903-residue polypeptide: Dual 3',5'-cyclic-AMP and -GMP phosphodiesterase 11A (903 aa).

GAF domains are found at residues 175–324 (DLTS…GIAI) and 356–512 (DLEK…GLGI). Position 378 (Ser-378) interacts with 3',5'-cyclic GMP. One can recognise a PDEase domain in the interval 542–866 (SKTEVDKFKA…VKWEELDKKR (325 aa)). The Proton donor role is filled by His-618. 4 residues coordinate a divalent metal cation: His-622, His-658, Asp-659, and Asp-770. Residues 863-903 (DKKRQHDHGASVPASPCSAAEGSETGGVPCCSNNTPPTHVS) form a disordered region. Positions 893 to 903 (CSNNTPPTHVS) are enriched in polar residues.

This sequence belongs to the cyclic nucleotide phosphodiesterase family. A divalent metal cation is required as a cofactor.

It localises to the cytoplasm. It is found in the cytosol. It catalyses the reaction 3',5'-cyclic GMP + H2O = GMP + H(+). It carries out the reaction 3',5'-cyclic AMP + H2O = AMP + H(+). Functionally, plays a role in signal transduction by regulating the intracellular concentration of cyclic nucleotides cAMP and cGMP. Catalyzes the hydrolysis of both cAMP and cGMP to 5'-AMP and 5'-GMP, respectively. This Takifugu rubripes (Japanese pufferfish) protein is Dual 3',5'-cyclic-AMP and -GMP phosphodiesterase 11A (pde11a).